The following is a 326-amino-acid chain: Vacuolar protein sorting-associated protein 26A-A (326 aa).

Positions 306–326 (TNFHQRFEPQEPQASAEEPEI) are disordered. The segment covering 315–326 (QEPQASAEEPEI) has biased composition (low complexity).

The protein belongs to the VPS26 family. As to quaternary structure, component of the heterotrimeric retromer cargo-selective complex (CSC) which is believed to associate with variable sorting nexins to form functionally distinct retromer complex variants.

The protein localises to the cytoplasm. It is found in the endosome membrane. Its subcellular location is the early endosome. Its function is as follows. Acts as a component of the retromer cargo-selective complex (CSC). The CSC is believed to be the core functional component of retromer or respective retromer complex variants acting to prevent missorting of selected transmembrane cargo proteins into the lysosomal degradation pathway. Retromer mediates retrograde transport of cargo proteins from endosomes to the trans-Golgi network (TGN). In Xenopus laevis (African clawed frog), this protein is Vacuolar protein sorting-associated protein 26A-A (vps26a-a).